The following is a 32-amino-acid chain: Variegin (32 aa).

Residues 1-32 (SDQGDVAEPKMHKTAPPFDFEAIPEEYLDDES) form a disordered region. The contains the active site stretch occupies residues 8–14 (EPKMHKT). T14 carries O-linked (Hex) threonine glycosylation. Residues 22–32 (AIPEEYLDDES) show a composition bias toward acidic residues.

As to quaternary structure, interacts with human F2 (thrombin); the interaction results in thrombin inhibition.

The protein localises to the secreted. Thrombin inhibitor. Does not inhibit other serine proteases. The sequence is that of Variegin from Amblyomma variegatum (Tropical bont tick).